The sequence spans 155 residues: Small ribosomal subunit protein uS7cz/uS7cy (155 aa).

The protein belongs to the universal ribosomal protein uS7 family. As to quaternary structure, part of the 30S ribosomal subunit.

It is found in the plastid. The protein localises to the chloroplast. Its function is as follows. One of the primary rRNA binding proteins, it binds directly to 16S rRNA where it nucleates assembly of the head domain of the 30S subunit. The chain is Small ribosomal subunit protein uS7cz/uS7cy (rps7-A) from Cucumis sativus (Cucumber).